A 279-amino-acid chain; its full sequence is Thymidylate synthase (279 aa).

Residue 133–134 (RR) participates in dUMP binding. C154 functions as the Nucleophile in the catalytic mechanism. DUMP is bound by residues 178 to 181 (RSND), N189, and 219 to 221 (HIY). (6R)-5,10-methylene-5,6,7,8-tetrahydrofolate is bound at residue D181. Position 278 (A278) interacts with (6R)-5,10-methylene-5,6,7,8-tetrahydrofolate.

The protein belongs to the thymidylate synthase family. Bacterial-type ThyA subfamily. As to quaternary structure, homodimer.

It localises to the cytoplasm. The catalysed reaction is dUMP + (6R)-5,10-methylene-5,6,7,8-tetrahydrofolate = 7,8-dihydrofolate + dTMP. It participates in pyrimidine metabolism; dTTP biosynthesis. Its function is as follows. Catalyzes the reductive methylation of 2'-deoxyuridine-5'-monophosphate (dUMP) to 2'-deoxythymidine-5'-monophosphate (dTMP) while utilizing 5,10-methylenetetrahydrofolate (mTHF) as the methyl donor and reductant in the reaction, yielding dihydrofolate (DHF) as a by-product. This enzymatic reaction provides an intracellular de novo source of dTMP, an essential precursor for DNA biosynthesis. The sequence is that of Thymidylate synthase from Streptococcus pyogenes serotype M3 (strain SSI-1).